The chain runs to 383 residues: tRNA pseudouridine synthase B (383 aa).

Aspartate 53 (nucleophile) is an active-site residue.

Belongs to the pseudouridine synthase TruB family. Type 1 subfamily.

It catalyses the reaction uridine(55) in tRNA = pseudouridine(55) in tRNA. Responsible for synthesis of pseudouridine from uracil-55 in the psi GC loop of transfer RNAs. The chain is tRNA pseudouridine synthase B from Tropheryma whipplei (strain TW08/27) (Whipple's bacillus).